The primary structure comprises 354 residues: Protein RecA (354 aa).

Position 78–85 (78–85) interacts with ATP; the sequence is GPESSGKT.

It belongs to the RecA family.

It is found in the cytoplasm. Its function is as follows. Can catalyze the hydrolysis of ATP in the presence of single-stranded DNA, the ATP-dependent uptake of single-stranded DNA by duplex DNA, and the ATP-dependent hybridization of homologous single-stranded DNAs. It interacts with LexA causing its activation and leading to its autocatalytic cleavage. In Zymomonas mobilis subsp. mobilis (strain ATCC 31821 / ZM4 / CP4), this protein is Protein RecA.